Here is a 251-residue protein sequence, read N- to C-terminus: Imidazole glycerol phosphate synthase subunit HisF (251 aa).

Residues D12 and D131 contribute to the active site.

The protein belongs to the HisA/HisF family. As to quaternary structure, heterodimer of HisH and HisF.

It is found in the cytoplasm. The enzyme catalyses 5-[(5-phospho-1-deoxy-D-ribulos-1-ylimino)methylamino]-1-(5-phospho-beta-D-ribosyl)imidazole-4-carboxamide + L-glutamine = D-erythro-1-(imidazol-4-yl)glycerol 3-phosphate + 5-amino-1-(5-phospho-beta-D-ribosyl)imidazole-4-carboxamide + L-glutamate + H(+). It participates in amino-acid biosynthesis; L-histidine biosynthesis; L-histidine from 5-phospho-alpha-D-ribose 1-diphosphate: step 5/9. In terms of biological role, IGPS catalyzes the conversion of PRFAR and glutamine to IGP, AICAR and glutamate. The HisF subunit catalyzes the cyclization activity that produces IGP and AICAR from PRFAR using the ammonia provided by the HisH subunit. This chain is Imidazole glycerol phosphate synthase subunit HisF, found in Streptomyces griseus subsp. griseus (strain JCM 4626 / CBS 651.72 / NBRC 13350 / KCC S-0626 / ISP 5235).